The sequence spans 434 residues: Eukaryotic peptide chain release factor subunit 1-2 (434 aa).

Ala-2 bears the N-acetylalanine mark.

It belongs to the eukaryotic release factor 1 family. In terms of assembly, heterodimer of two subunits, one of which binds GTP.

Its subcellular location is the cytoplasm. In terms of biological role, directs the termination of nascent peptide synthesis (translation) in response to the termination codons UAA, UAG and UGA. Modulates plant growth and development. In Arabidopsis thaliana (Mouse-ear cress), this protein is Eukaryotic peptide chain release factor subunit 1-2.